A 522-amino-acid chain; its full sequence is GMP synthase [glutamine-hydrolyzing] (522 aa).

In terms of domain architecture, Glutamine amidotransferase type-1 spans 8-204 (RLLIIDFGSQ…FVRLAGFKGD (197 aa)). Cysteine 86 (nucleophile) is an active-site residue. Active-site residues include histidine 179 and glutamate 181. Positions 205–397 (WTMGAYREEA…LGLPASFIGR (193 aa)) constitute a GMPS ATP-PPase domain. An ATP-binding site is contributed by 232 to 238 (SGGVDSS).

As to quaternary structure, homodimer.

It catalyses the reaction XMP + L-glutamine + ATP + H2O = GMP + L-glutamate + AMP + diphosphate + 2 H(+). It functions in the pathway purine metabolism; GMP biosynthesis; GMP from XMP (L-Gln route): step 1/1. Catalyzes the synthesis of GMP from XMP. The chain is GMP synthase [glutamine-hydrolyzing] from Roseobacter denitrificans (strain ATCC 33942 / OCh 114) (Erythrobacter sp. (strain OCh 114)).